A 112-amino-acid polypeptide reads, in one-letter code: Putative pterin-4-alpha-carbinolamine dehydratase (112 aa).

Belongs to the pterin-4-alpha-carbinolamine dehydratase family.

The catalysed reaction is (4aS,6R)-4a-hydroxy-L-erythro-5,6,7,8-tetrahydrobiopterin = (6R)-L-erythro-6,7-dihydrobiopterin + H2O. The polypeptide is Putative pterin-4-alpha-carbinolamine dehydratase (Shewanella putrefaciens (strain CN-32 / ATCC BAA-453)).